The primary structure comprises 553 residues: Putative transport protein YidE (553 aa).

5 helical membrane passes run 4–24 (IALT…IGNV), 28–48 (GIGL…HFVS), 65–85 (FGLI…FFAS), 95–115 (LFAV…HKLF), and 158–178 (MSYA…MWML). RCK C-terminal domains lie at 191–276 (QQHE…VIGQ) and 279–361 (DTSL…VLGN). Transmembrane regions (helical) follow at residues 371-391 (MLPV…PVFV), 394-414 (FPAA…LILG), 439-459 (IVLF…NTLV), 464-484 (LSWI…VGIL), and 533-553 (LVMF…WSIG).

This sequence belongs to the AAE transporter (TC 2.A.81) family. YidE subfamily.

Its subcellular location is the cell membrane. The polypeptide is Putative transport protein YidE (Shigella dysenteriae serotype 1 (strain Sd197)).